The chain runs to 523 residues: 2-isopropylmalate synthase (523 aa).

Residues 5–267 (VIIFDTTLRD…ETGINAKEIH (263 aa)) enclose the Pyruvate carboxyltransferase domain. Residues aspartate 14, histidine 202, histidine 204, and asparagine 238 each coordinate Mn(2+). The segment at 392–523 (KLQQLVVHSD…QQNKRELGGV (132 aa)) is regulatory domain.

Belongs to the alpha-IPM synthase/homocitrate synthase family. LeuA type 1 subfamily. As to quaternary structure, homodimer. The cofactor is Mn(2+).

The protein localises to the cytoplasm. It carries out the reaction 3-methyl-2-oxobutanoate + acetyl-CoA + H2O = (2S)-2-isopropylmalate + CoA + H(+). The protein operates within amino-acid biosynthesis; L-leucine biosynthesis; L-leucine from 3-methyl-2-oxobutanoate: step 1/4. In terms of biological role, catalyzes the condensation of the acetyl group of acetyl-CoA with 3-methyl-2-oxobutanoate (2-ketoisovalerate) to form 3-carboxy-3-hydroxy-4-methylpentanoate (2-isopropylmalate). This Shewanella pealeana (strain ATCC 700345 / ANG-SQ1) protein is 2-isopropylmalate synthase.